The chain runs to 225 residues: Putative adhesin RT0816 (225 aa).

The N-terminal stretch at 1–22 is a signal peptide; that stretch reads MKKLLLIAATSATILSSSISFA.

This Rickettsia typhi (strain ATCC VR-144 / Wilmington) protein is Putative adhesin RT0816.